The primary structure comprises 874 residues: Tyrosine-protein kinase receptor TYRO3 (874 aa).

An N-terminal signal peptide occupies residues 1–20 (MEVSLCILLFLLHFNEGIHG). Ig-like C2-type domains are found at residues 21–106 (VRFT…IISS) and 117–198 (PHFG…GTVH). Over 21 to 411 (VRFTQKPFHQ…QAQTQRGHMW (391 aa)) the chain is Extracellular. C42 and C95 are oxidised to a cystine. 6 N-linked (GlcNAc...) asparagine glycosylation sites follow: N135, N174, N217, N270, N305, and N373. C138 and C181 are joined by a disulfide. 2 Fibronectin type-III domains span residues 202–297 (RPDS…TPQA) and 299–403 (PSAA…AMQA). The helical transmembrane segment at 412 to 432 (VGLLFGLLVATMVGLLLIVLI) threads the bilayer. Topologically, residues 433–874 (RNRGKETQFG…EEEEDVIINV (442 aa)) are cytoplasmic. The region spanning 497–768 (LTLGRMLGKG…QHLIDQLELL (272 aa)) is the Protein kinase domain. Residues 503–511 (LGKGEFGSV) and K529 contribute to the ATP site. D634 acts as the Proton acceptor in catalysis. Residue Y665 is modified to Phosphotyrosine; by autocatalysis.

Belongs to the protein kinase superfamily. Tyr protein kinase family. AXL/UFO subfamily.

It is found in the cell membrane. The enzyme catalyses L-tyrosyl-[protein] + ATP = O-phospho-L-tyrosyl-[protein] + ADP + H(+). May be involved in cell adhesion processes, particularly in the central nervous system. In Danio rerio (Zebrafish), this protein is Tyrosine-protein kinase receptor TYRO3 (tyro3).